Here is a 349-residue protein sequence, read N- to C-terminus: 4-hydroxythreonine-4-phosphate dehydrogenase (349 aa).

Substrate-binding residues include His141 and Thr142. Residues His176, His221, and His276 each coordinate a divalent metal cation. Substrate is bound by residues Lys284, Asn293, and Arg302.

This sequence belongs to the PdxA family. As to quaternary structure, homodimer. Zn(2+) is required as a cofactor. Mg(2+) serves as cofactor. It depends on Co(2+) as a cofactor.

The protein localises to the cytoplasm. The catalysed reaction is 4-(phosphooxy)-L-threonine + NAD(+) = 3-amino-2-oxopropyl phosphate + CO2 + NADH. Its pathway is cofactor biosynthesis; pyridoxine 5'-phosphate biosynthesis; pyridoxine 5'-phosphate from D-erythrose 4-phosphate: step 4/5. In terms of biological role, catalyzes the NAD(P)-dependent oxidation of 4-(phosphooxy)-L-threonine (HTP) into 2-amino-3-oxo-4-(phosphooxy)butyric acid which spontaneously decarboxylates to form 3-amino-2-oxopropyl phosphate (AHAP). In Methylorubrum extorquens (strain CM4 / NCIMB 13688) (Methylobacterium extorquens), this protein is 4-hydroxythreonine-4-phosphate dehydrogenase.